A 127-amino-acid polypeptide reads, in one-letter code: Small ribosomal subunit protein uS11 (127 aa).

This sequence belongs to the universal ribosomal protein uS11 family. In terms of assembly, part of the 30S ribosomal subunit. Interacts with proteins S7 and S18. Binds to IF-3.

In terms of biological role, located on the platform of the 30S subunit, it bridges several disparate RNA helices of the 16S rRNA. Forms part of the Shine-Dalgarno cleft in the 70S ribosome. The polypeptide is Small ribosomal subunit protein uS11 (Anaeromyxobacter sp. (strain Fw109-5)).